Reading from the N-terminus, the 299-residue chain is NAD(+) hydrolase PdTIR (299 aa).

In terms of domain architecture, TIR spans 164 to 297 (PPHDIFISHA…EIVADLMAII (134 aa)). NAD(+)-binding positions include 173–174 (AW) and arginine 203. Glutamate 239 is a catalytic residue.

As to quaternary structure, homodimer. Interacts with host MYD88.

It catalyses the reaction NAD(+) + H2O = ADP-D-ribose + nicotinamide + H(+). Functionally, NAD(+) hydrolase (NADase) that catalyzes cleavage of NAD(+) into ADP-D-ribose (ADPR) and nicotinamide. In Paracoccus denitrificans (strain Pd 1222), this protein is NAD(+) hydrolase PdTIR.